Consider the following 1391-residue polypeptide: DNA-directed RNA polymerase subunit beta'' (1391 aa).

Positions 220, 291, 298, and 301 each coordinate Zn(2+).

It belongs to the RNA polymerase beta' chain family. RpoC2 subfamily. As to quaternary structure, in plastids the minimal PEP RNA polymerase catalytic core is composed of four subunits: alpha, beta, beta', and beta''. When a (nuclear-encoded) sigma factor is associated with the core the holoenzyme is formed, which can initiate transcription. Requires Zn(2+) as cofactor.

The protein resides in the plastid. It is found in the chloroplast. It carries out the reaction RNA(n) + a ribonucleoside 5'-triphosphate = RNA(n+1) + diphosphate. DNA-dependent RNA polymerase catalyzes the transcription of DNA into RNA using the four ribonucleoside triphosphates as substrates. The chain is DNA-directed RNA polymerase subunit beta'' from Gossypium barbadense (Sea Island cotton).